A 73-amino-acid polypeptide reads, in one-letter code: MQDKALFSGALDTPFMQVITWARLYHKNQKRYEKIKKSFTFHETCLQSTKGIVAERILKPCVRRKVNGKFRST.

This is an uncharacterized protein from Treponema pallidum (strain Nichols).